The primary structure comprises 826 residues: Zinc phosphodiesterase ELAC protein 2 (826 aa).

A mitochondrion-targeting transit peptide spans 1 to 16 (MWALCSLLRSAAGRTM). Disordered stretches follow at residues 16 to 51 (MSQG…PSGC) and 188 to 231 (EQRR…VSQR). Basic and acidic residues predominate over residues 27-38 (ARRERPRKDPLR). A phosphoserine mark is found at S199, S208, S212, S229, S618, and S736. A compositionally biased stretch (basic and acidic residues) spans 208 to 224 (SPERSSDSESNENEPHL). The segment at 798–826 (ELAGGLEDGEPQQKRAHTEEPQAKKVRAQ) is disordered. Over residues 808–820 (PQQKRAHTEEPQA) the composition is skewed to basic and acidic residues.

The protein belongs to the RNase Z family. Homodimer. Interacts with PTCD1. The cofactor is Zn(2+). In terms of tissue distribution, widely expressed. Highly expressed in heart, placenta, liver, skeletal muscle, kidney, pancreas, testis and ovary. Weakly expressed in brain, lung, spleen, thymus, prostate, small intestine, colon and leukocytes.

It is found in the mitochondrion. The protein resides in the mitochondrion matrix. It localises to the mitochondrion nucleoid. Its subcellular location is the nucleus. The catalysed reaction is Endonucleolytic cleavage of RNA, removing extra 3' nucleotides from tRNA precursor, generating 3' termini of tRNAs. A 3'-hydroxy group is left at the tRNA terminus and a 5'-phosphoryl group is left at the trailer molecule.. Functionally, zinc phosphodiesterase, which displays mitochondrial tRNA 3'-processing endonuclease activity. Involved in tRNA maturation, by removing a 3'-trailer from precursor tRNA. Associates with mitochondrial DNA complexes at the nucleoids to initiate RNA processing and ribosome assembly. This is Zinc phosphodiesterase ELAC protein 2 (ELAC2) from Homo sapiens (Human).